The sequence spans 548 residues: CTP synthase (548 aa).

Residues 1-270 (MNRRSCAFIF…DTKISALLGC (270 aa)) are amidoligase domain. Position 17 (Ser17) interacts with CTP. Ser17 provides a ligand contact to UTP. ATP is bound by residues 18 to 23 (SIGKGL) and Asp75. Positions 75 and 143 each coordinate Mg(2+). CTP-binding positions include 150–152 (DIE), 190–195 (KTKPSQ), and Lys227. UTP contacts are provided by residues 190 to 195 (KTKPSQ) and Lys227. Positions 305-548 (YSGLCDAYIS…VRAGLLRKYS (244 aa)) constitute a Glutamine amidotransferase type-1 domain. Residue Gly356 participates in L-glutamine binding. The active-site Nucleophile; for glutamine hydrolysis is the Cys383. L-glutamine contacts are provided by residues 384–387 (FGFQ), Glu407, and Arg475. Catalysis depends on residues His521 and Glu523.

This sequence belongs to the CTP synthase family. Homotetramer.

The enzyme catalyses UTP + L-glutamine + ATP + H2O = CTP + L-glutamate + ADP + phosphate + 2 H(+). The catalysed reaction is L-glutamine + H2O = L-glutamate + NH4(+). It carries out the reaction UTP + NH4(+) + ATP = CTP + ADP + phosphate + 2 H(+). Its pathway is pyrimidine metabolism; CTP biosynthesis via de novo pathway; CTP from UDP: step 2/2. Allosterically activated by GTP, when glutamine is the substrate; GTP has no effect on the reaction when ammonia is the substrate. The allosteric effector GTP functions by stabilizing the protein conformation that binds the tetrahedral intermediate(s) formed during glutamine hydrolysis. Inhibited by the product CTP, via allosteric rather than competitive inhibition. Catalyzes the ATP-dependent amination of UTP to CTP with either L-glutamine or ammonia as the source of nitrogen. Regulates intracellular CTP levels through interactions with the four ribonucleotide triphosphates. In Neorickettsia sennetsu (strain ATCC VR-367 / Miyayama) (Ehrlichia sennetsu), this protein is CTP synthase.